A 343-amino-acid polypeptide reads, in one-letter code: Endoplasmic reticulum-resident calcium binding protein (343 aa).

A signal peptide spans methionine 1–serine 26. 5 EF-hand domains span residues glycine 59 to glutamate 94, isoleucine 95 to alanine 130, lysine 135 to glutamate 170, leucine 172 to glycine 207, and lysine 210 to glutamate 245. Residues aspartate 72, asparagine 74, aspartate 76, glutamate 78, glutamate 83, aspartate 108, aspartate 110, aspartate 112, glutamate 119, aspartate 148, aspartate 150, aspartate 152, lysine 154, glutamate 159, aspartate 185, asparagine 187, aspartate 189, lysine 191, glutamate 196, aspartate 223, asparagine 225, aspartate 227, and glutamate 234 each coordinate Ca(2+). Residues glutamate 313 to aspartate 331 show a composition bias toward acidic residues. The tract at residues glutamate 313–leucine 343 is disordered.

The protein belongs to the CREC family.

Its subcellular location is the endoplasmic reticulum. Functionally, calcium-binding protein. Required for schizont to ring transition. Required for the breakdown of the parasitophorous vacuole membrane during egress. Required for the proteolytic maturation of apical membrane antigen 1 (AMA-1) during egress. Required for the proteolytic maturation of subtilisin-like protease 1 (SUB1) during egress. Required for the proteolytic maturation of plasmepsin X (PMX) during egress. This Plasmodium falciparum (isolate 3D7) protein is Endoplasmic reticulum-resident calcium binding protein.